The following is a 258-amino-acid chain: Peptide methionine sulfoxide reductase A4, chloroplastic (258 aa).

The transit peptide at 1–53 (MQVLVVSPPLIAAASLSKPLNSLSKAALSFSRAKPICPFPQTSRRPISVYKSP) directs the protein to the chloroplast. Met-54 carries the post-translational modification N-acetylmethionine. Residues 62-89 (GFGSRPQAQADPSSAAIAQGPDDDVPSS) are disordered. Ser-245 is modified (phosphoserine).

Belongs to the MsrA Met sulfoxide reductase family. Expressed in rosette and cauline leaves, and at lower levels in stems and flowers (at protein level).

It localises to the plastid. It is found in the chloroplast stroma. The catalysed reaction is L-methionyl-[protein] + [thioredoxin]-disulfide + H2O = L-methionyl-(S)-S-oxide-[protein] + [thioredoxin]-dithiol. It carries out the reaction [thioredoxin]-disulfide + L-methionine + H2O = L-methionine (S)-S-oxide + [thioredoxin]-dithiol. Its function is as follows. Catalyzes the reduction of methionine sulfoxide (MetSO) to methionine in proteins. Plays a protective role against oxidative stress by restoring activity to proteins that have been inactivated by methionine oxidation. Prevents the methionine sulfoxidation of the heat shock protein HSP21 and its subsequent inactivation. MSRA family specifically reduces the MetSO S-enantiomer. The chain is Peptide methionine sulfoxide reductase A4, chloroplastic (MSR4) from Arabidopsis thaliana (Mouse-ear cress).